The chain runs to 323 residues: o-succinylbenzoate synthase (323 aa).

Lys134 serves as the catalytic Proton donor. Positions 162, 191, and 214 each coordinate Mg(2+). The Proton acceptor role is filled by Lys236.

It belongs to the mandelate racemase/muconate lactonizing enzyme family. MenC type 1 subfamily. It depends on a divalent metal cation as a cofactor.

The catalysed reaction is (1R,6R)-6-hydroxy-2-succinyl-cyclohexa-2,4-diene-1-carboxylate = 2-succinylbenzoate + H2O. Its pathway is quinol/quinone metabolism; 1,4-dihydroxy-2-naphthoate biosynthesis; 1,4-dihydroxy-2-naphthoate from chorismate: step 4/7. It participates in quinol/quinone metabolism; menaquinone biosynthesis. Functionally, converts 2-succinyl-6-hydroxy-2,4-cyclohexadiene-1-carboxylate (SHCHC) to 2-succinylbenzoate (OSB). This Yersinia pseudotuberculosis serotype O:3 (strain YPIII) protein is o-succinylbenzoate synthase.